The following is a 277-amino-acid chain: uncharacterized protein (277 aa).

Solcar repeat units lie at residues 1–84 (MDQA…SKRV), 96–179 (ISVL…LKLW), and 184–268 (PTSL…VGMH). 6 helical membrane-spanning segments follow: residues 3 to 24 (QAIA…LDLA), 60 to 80 (LSIN…IYDF), 102 to 122 (LCSS…IWVV), 152 to 172 (CYAG…QFMA), 190 to 210 (IFMS…LLVI), and 240 to 261 (FYKG…TFLV).

It belongs to the mitochondrial carrier (TC 2.A.29) family.

Its subcellular location is the mitochondrion inner membrane. This is an uncharacterized protein from Schizosaccharomyces pombe (strain 972 / ATCC 24843) (Fission yeast).